Consider the following 131-residue polypeptide: Protein Bouncer (131 aa).

An N-terminal signal peptide occupies residues M1 to C26. Disulfide bonds link C31-C56, C50-C74, C80-C99, and C100-C105. The UPAR/Ly6 domain maps to C31–N106. N65 is a glycosylation site (N-linked (GlcNAc...) asparagine). N106 carries GPI-anchor amidated asparagine lipidation. The propeptide at R107–T131 is removed in mature form.

This sequence belongs to the SPACA4/bouncer family. As to quaternary structure, interacts with spermatocyte complex composed of izumo1, spaca6 and tmem81. As to expression, expressed in oocytes. Not expressed in testis.

It localises to the cell membrane. Its function is as follows. Oocyte-expressed fertilization factor that mediates sperm-egg binding and is essential for sperm entry into the egg. Necessary and sufficient to mediate species-specific gamete recognition and fertilization, which is essential for vertebrate species performing external fertilization. External fertilization cannot guarantee that only conspecific sperm reaches the egg by precopulatory mate choice: proteins such as Bouncer can therefore support the selection of conspecific sperm. The polypeptide is Protein Bouncer (Oryzias latipes (Japanese rice fish)).